The sequence spans 475 residues: Protein EARLY HEADING DATE 2 (475 aa).

Over residues 1 to 16 the composition is skewed to polar residues; it reads MLLSDLSSDQEATGSN. A disordered region spans residues 1–26; that stretch reads MLLSDLSSDQEATGSNSHGGGGGDRM. 2 consecutive C2H2-type zinc fingers follow at residues 105 to 127 and 155 to 185; these read FVCEVCNKGFQRDQNLQLHRRGH and YVCPEPTCVHHDPARALGDLTGIKKHFSRKH. Short sequence motifs (nuclear localization signal) lie at residues 123–130 and 177–184; these read HRRGHNLP and IKKHFSRK. The C2H2-type 2; degenerate zinc-finger motif lies at 190-213; that stretch reads WRCERCGKRYAVHSDWKAHVKNCG. Residues Cys-192, Cys-195, His-208, Cys-212, Cys-219, Cys-221, His-234, and Cys-238 each coordinate Zn(2+). The CCHC-type 2; atypical zinc-finger motif lies at 217-240; that stretch reads YRCDCGILFSRKDSLLTHRAFCDA. Positions 227-239 are SHR-binding; that stretch reads RKDSLLTHRAFCD.

Mostly expressed in developing leaves (more in sheaths than in blades, especially in the outer epidermal cell of immature leaves and in the region immediately beneath the meristem where internodes are visible) and panicles, and, at very low levels, around the shoot apex and in roots.

The protein localises to the nucleus. Transcription activator that acts as a flowering master switch in both long and short days, independently of the circadian clock. Promotes flowering upstream of HD1 by up-regulating FTL1, FTL4, FTL5, FTL6, EHD1, HD3A and RFT1. Seems to repress FTL11 expression. May recognize the consensus motif 5'-TTTGTCGTAAT-3' in target gene promoters. The polypeptide is Protein EARLY HEADING DATE 2 (Oryza sativa subsp. japonica (Rice)).